Consider the following 277-residue polypeptide: 4-hydroxy-3-methylbut-2-enyl diphosphate reductase (277 aa).

Cysteine 12 lines the [4Fe-4S] cluster pocket. Residues histidine 36 and histidine 70 each coordinate (2E)-4-hydroxy-3-methylbut-2-enyl diphosphate. Positions 36 and 70 each coordinate dimethylallyl diphosphate. Isopentenyl diphosphate-binding residues include histidine 36 and histidine 70. Cysteine 92 is a binding site for [4Fe-4S] cluster. Position 120 (histidine 120) interacts with (2E)-4-hydroxy-3-methylbut-2-enyl diphosphate. Dimethylallyl diphosphate is bound at residue histidine 120. Histidine 120 serves as a coordination point for isopentenyl diphosphate. Residue glutamate 122 is the Proton donor of the active site. Threonine 158 lines the (2E)-4-hydroxy-3-methylbut-2-enyl diphosphate pocket. Cysteine 186 lines the [4Fe-4S] cluster pocket. Serine 214, asparagine 216, and serine 258 together coordinate (2E)-4-hydroxy-3-methylbut-2-enyl diphosphate. Dimethylallyl diphosphate-binding residues include serine 214, asparagine 216, and serine 258. 3 residues coordinate isopentenyl diphosphate: serine 214, asparagine 216, and serine 258.

The protein belongs to the IspH family. Requires [4Fe-4S] cluster as cofactor.

It catalyses the reaction isopentenyl diphosphate + 2 oxidized [2Fe-2S]-[ferredoxin] + H2O = (2E)-4-hydroxy-3-methylbut-2-enyl diphosphate + 2 reduced [2Fe-2S]-[ferredoxin] + 2 H(+). The enzyme catalyses dimethylallyl diphosphate + 2 oxidized [2Fe-2S]-[ferredoxin] + H2O = (2E)-4-hydroxy-3-methylbut-2-enyl diphosphate + 2 reduced [2Fe-2S]-[ferredoxin] + 2 H(+). It participates in isoprenoid biosynthesis; dimethylallyl diphosphate biosynthesis; dimethylallyl diphosphate from (2E)-4-hydroxy-3-methylbutenyl diphosphate: step 1/1. The protein operates within isoprenoid biosynthesis; isopentenyl diphosphate biosynthesis via DXP pathway; isopentenyl diphosphate from 1-deoxy-D-xylulose 5-phosphate: step 6/6. In terms of biological role, catalyzes the conversion of 1-hydroxy-2-methyl-2-(E)-butenyl 4-diphosphate (HMBPP) into a mixture of isopentenyl diphosphate (IPP) and dimethylallyl diphosphate (DMAPP). Acts in the terminal step of the DOXP/MEP pathway for isoprenoid precursor biosynthesis. This chain is 4-hydroxy-3-methylbut-2-enyl diphosphate reductase, found in Campylobacter jejuni subsp. jejuni serotype O:6 (strain 81116 / NCTC 11828).